Reading from the N-terminus, the 494-residue chain is Subtilisin-like serine protease EN45_078720 (494 aa).

The N-terminal stretch at Met-1–Ala-16 is a signal peptide. A propeptide spans Ser-17–Met-136 (removed in mature form). One can recognise an Inhibitor I9 domain in the interval Ser-43–Met-136. One can recognise a Peptidase S8 domain in the interval Pro-146–Leu-448. 2 igE-binding regions span residues Val-180–Trp-198 and Glu-209–Lys-231. Catalysis depends on charge relay system residues Asp-182 and His-214. Asn-244 and Asn-280 each carry an N-linked (GlcNAc...) asparagine glycan. The active-site Charge relay system is the Ser-376. Asn-443 carries N-linked (GlcNAc...) asparagine glycosylation. The propeptide at Lys-454–Ala-494 is removed in mature form.

It belongs to the peptidase S8 family.

Its function is as follows. Serine protease. The sequence is that of Subtilisin-like serine protease EN45_078720 from Penicillium chrysogenum (Penicillium notatum).